Consider the following 325-residue polypeptide: Proto-oncogene Mas (325 aa).

Topologically, residues 1–36 (MDGSNVTSFVVEEPTNISTGRNASVGNAHRQIPIVH) are extracellular. 3 N-linked (GlcNAc...) asparagine glycosylation sites follow: Asn-5, Asn-16, and Asn-22. A helical transmembrane segment spans residues 37 to 61 (WVIMSISPVGFVENGILLWFLCFRM). Residues 62 to 65 (RRNP) are Cytoplasmic-facing. A helical transmembrane segment spans residues 66 to 86 (FTVYITHLSIADISLLFCIFI). The Extracellular segment spans residues 87–104 (LSIDYALDYELSSGHYYT). The helical transmembrane segment at 105 to 128 (IVTLSVTFLFGYNTGLYLLTAISV) threads the bilayer. The Cytoplasmic portion of the chain corresponds to 129–149 (ERCLSVLYPIWYRCHRPKYQS). The helical transmembrane segment at 150–172 (ALVCALLWALSCLVTTMEYVMCI) threads the bilayer. Residues 173-185 (DREEESHSRNDCR) lie on the Extracellular side of the membrane. Residues 186–206 (AVIIFIAILSFLVFTPLMLVS) traverse the membrane as a helical segment. Over 207–224 (STILVVKIRKNTWASHSS) the chain is Cytoplasmic. The helical transmembrane segment at 225–245 (KLYIVIMVTIIIFLIFAMPMR) threads the bilayer. Over 246 to 263 (LLYLLYYEYWSTFGNLHH) the chain is Extracellular. A helical membrane pass occupies residues 264–284 (ISLLFSTINSSANPFIYFFVG). Residues 285–325 (SSKKKRFKESLKVVLTRAFKDEMQPRRQKDNCNTVTVETVV) lie on the Cytoplasmic side of the membrane.

It belongs to the G-protein coupled receptor 1 family. In terms of assembly, interacts with AGTR1. Interacts with FLNA (via filamin repeat 21); increases PKA-mediated phosphorylation of FLNA.

It localises to the cell membrane. In terms of biological role, receptor for angiotensin 1-7. Acts specifically as a functional antagonist of AGTR1 (angiotensin-2 type 1 receptor), although it up-regulates AGTR1 receptor levels. Positive regulation of AGTR1 levels occurs through activation of the G-proteins GNA11 and GNAQ, and stimulation of the protein kinase C signaling cascade. The antagonist effect on AGTR1 function is probably due to AGTR1 being physically altered by MAS1. The protein is Proto-oncogene Mas (MAS1) of Homo sapiens (Human).